Consider the following 218-residue polypeptide: Thiopurine S-methyltransferase (218 aa).

S-adenosyl-L-methionine contacts are provided by W10, L45, E66, and R123.

It belongs to the class I-like SAM-binding methyltransferase superfamily. TPMT family.

It is found in the cytoplasm. The catalysed reaction is S-adenosyl-L-methionine + a thiopurine = S-adenosyl-L-homocysteine + a thiopurine S-methylether.. The chain is Thiopurine S-methyltransferase from Pseudomonas paraeruginosa (strain DSM 24068 / PA7) (Pseudomonas aeruginosa (strain PA7)).